A 160-amino-acid chain; its full sequence is Large ribosomal subunit protein eL14 (160 aa).

Residues 136 to 160 are disordered; that stretch reads SDGTPRILKKDRRERLRAEKAKAKK. The segment covering 146–160 has biased composition (basic and acidic residues); it reads DRRERLRAEKAKAKK.

This sequence belongs to the eukaryotic ribosomal protein eL14 family.

The protein is Large ribosomal subunit protein eL14 (RpL14) of Drosophila virilis (Fruit fly).